Here is a 395-residue protein sequence, read N- to C-terminus: ATP-dependent RNA helicase eIF4A (395 aa).

The Q motif motif lies at 22–50 (TSFDDLGLKDELLRGIYGYGFENPSSIQQ). The Helicase ATP-binding domain occupies 53 to 223 (ILPVIKGNDV…GKFMRDPVRI (171 aa)). 66-73 (AQSGTGKT) contacts ATP. A DEAD box motif is present at residues 171–174 (DEAD). The Helicase C-terminal domain maps to 234–395 (GIKQFYIDVE…EMPTNIADLI (162 aa)).

This sequence belongs to the DEAD box helicase family. eIF4A subfamily. As to quaternary structure, component of the eIF4F complex, which composition varies with external and internal environmental conditions. It is composed of at least eIF4A, eIF4E and eIF4G.

It is found in the cytoplasm. The enzyme catalyses ATP + H2O = ADP + phosphate + H(+). ATP-dependent RNA helicase which is a subunit of the eIF4F complex involved in cap recognition and is required for mRNA binding to ribosome. In the current model of translation initiation, eIF4A unwinds RNA secondary structures in the 5'-UTR of mRNAs which is necessary to allow efficient binding of the small ribosomal subunit, and subsequent scanning for the initiator codon. This Yarrowia lipolytica (strain CLIB 122 / E 150) (Yeast) protein is ATP-dependent RNA helicase eIF4A (TIF1).